Consider the following 897-residue polypeptide: Protein translocase subunit SecA (897 aa).

Residues Gln-87, 105–109 (GEGKT), and Asp-512 each bind ATP. Residues 846–897 (EEEQQKQARKKMVFNLVDEDETSEPSKSKKLAGRNEPCPCGSGKKYKKCCGK) form a disordered region. The Zn(2+) site is built by Cys-883, Cys-885, Cys-894, and Cys-895.

It belongs to the SecA family. As to quaternary structure, monomer and homodimer. Part of the essential Sec protein translocation apparatus which comprises SecA, SecYEG and auxiliary proteins SecDF-YajC and YidC. Zn(2+) is required as a cofactor.

Its subcellular location is the cell inner membrane. The protein localises to the cytoplasm. The catalysed reaction is ATP + H2O + cellular proteinSide 1 = ADP + phosphate + cellular proteinSide 2.. In terms of biological role, part of the Sec protein translocase complex. Interacts with the SecYEG preprotein conducting channel. Has a central role in coupling the hydrolysis of ATP to the transfer of proteins into and across the cell membrane, serving as an ATP-driven molecular motor driving the stepwise translocation of polypeptide chains across the membrane. The sequence is that of Protein translocase subunit SecA from Geobacter sulfurreducens (strain ATCC 51573 / DSM 12127 / PCA).